The chain runs to 308 residues: Dipeptide transport system permease protein DppB (308 aa).

The next 7 membrane-spanning stretches (helical) occupy residues 10 to 30 (WAMA…MKVI), 59 to 79 (LIFQ…GPSI), 100 to 120 (LGMT…VIAA), 131 to 151 (AMSL…TLLI), 168 to 188 (SPIH…AIIA), 228 to 248 (MPVI…SFVI), and 278 to 298 (VFYS…YGLL). Positions 94–295 (FPVSFELGMT…IMLFLVDLAY (202 aa)) constitute an ABC transmembrane type-1 domain.

This sequence belongs to the binding-protein-dependent transport system permease family. OppBC subfamily.

It localises to the cell membrane. Its function is as follows. Probably part of the ABC transporter DppBCDE involved in dipeptide transport. Responsible for the translocation of the substrate across the membrane. In Bacillus subtilis (strain 168), this protein is Dipeptide transport system permease protein DppB (dppB).